Reading from the N-terminus, the 151-residue chain is Ribosome maturation factor RimP (151 aa).

The protein belongs to the RimP family.

It is found in the cytoplasm. Required for maturation of 30S ribosomal subunits. The protein is Ribosome maturation factor RimP of Aliivibrio fischeri (strain ATCC 700601 / ES114) (Vibrio fischeri).